Here is a 311-residue protein sequence, read N- to C-terminus: tRNA dimethylallyltransferase 2 (311 aa).

15–22 contacts ATP; it reads GPTAVGKT. 17–22 serves as a coordination point for substrate; the sequence is TAVGKT. Positions 40–43 are interaction with substrate tRNA; that stretch reads DSMQ.

Belongs to the IPP transferase family. In terms of assembly, monomer. Mg(2+) is required as a cofactor.

The catalysed reaction is adenosine(37) in tRNA + dimethylallyl diphosphate = N(6)-dimethylallyladenosine(37) in tRNA + diphosphate. Catalyzes the transfer of a dimethylallyl group onto the adenine at position 37 in tRNAs that read codons beginning with uridine, leading to the formation of N6-(dimethylallyl)adenosine (i(6)A). In Syntrophus aciditrophicus (strain SB), this protein is tRNA dimethylallyltransferase 2.